Reading from the N-terminus, the 419-residue chain is Dual specificity mitogen-activated protein kinase kinase 7 (419 aa).

Residue Ala2 is modified to N-acetylalanine. Residues 2-30 (AASSLEQKLSRLEAKLKQENREARRRIDL) are a coiled coil. A compositionally biased stretch (basic and acidic residues) spans 18 to 30 (KQENREARRRIDL). Residues 18 to 76 (KQENREARRRIDLNLDISPQRPRPTLQLPLANDGGSRSPSSESSPQHPTPPARPRHMLG) are disordered. The span at 36-63 (PQRPRPTLQLPLANDGGSRSPSSESSPQ) shows a compositional bias: low complexity. The interval 37 to 57 (QRPRPTLQLPLANDGGSRSPS) is d domain. The Protein kinase domain maps to 120-380 (LENLGEMGSG…YNKLLEHSFI (261 aa)). Residues 126-134 (MGSGTCGQV) and Lys149 each bind ATP. Asp243 acts as the Proton acceptor in catalysis. Residue Ser271 is modified to Phosphoserine; by MAP3K. The residue at position 275 (Thr275) is a Phosphothreonine; by MAP3K. Positions 377 to 400 (HSFIKRYETLEVDVASWFKDVMAK) are DVD domain. Residue Ser411 is modified to Phosphoserine.

It belongs to the protein kinase superfamily. STE Ser/Thr protein kinase family. MAP kinase kinase subfamily. Interacts with isoform 1 of VRK2. Interacts (via its D domain) with its substrates MAPK8/JNK1, MAPK9/JNK2 and MAPK10/JNK3. Interacts (via its DVD domain) with MAP3Ks activators like MAP3K5/ASK1 and MAP3K1/MEKK1. Interacts with MAPK8IP1/JIP1, MAPK8IP2/JIP2 and MAPK8IP3/JIP3 scaffold proteins. Interacts with RASSF7, the interaction promotes phosphorylation. Found in a complex with SH3RF1, RAC1, MAP3K11/MLK3, MAPK8IP1/JIP1 and MAPK8/JNK1. Found in a complex with SH3RF1, RAC2, MAP3K7/TAK1, MAPK8IP1/JIP1, MAPK8/JNK1 and MAPK9/JNK2. The cofactor is Mg(2+). In terms of processing, activated by phosphorylation on Ser-271 and Thr-275 by MAP kinase kinase kinases (MAP3Ks). In terms of tissue distribution, ubiquitous; with highest level of expression in skeletal muscle. Isoform 3 is found at low levels in placenta, fetal liver, and skeletal muscle.

Its subcellular location is the nucleus. It is found in the cytoplasm. The catalysed reaction is L-seryl-[protein] + ATP = O-phospho-L-seryl-[protein] + ADP + H(+). The enzyme catalyses L-threonyl-[protein] + ATP = O-phospho-L-threonyl-[protein] + ADP + H(+). It catalyses the reaction L-tyrosyl-[protein] + ATP = O-phospho-L-tyrosyl-[protein] + ADP + H(+). With respect to regulation, activated by phosphorylation by specific MAP kinase kinase kinases such as MAP3K1/MEKK1, MAP3K3/MEKK3, MAP3K11/MLK3 and MAP3K12/DLK. Its function is as follows. Dual specificity protein kinase which acts as an essential component of the MAP kinase signal transduction pathway. Essential component of the stress-activated protein kinase/c-Jun N-terminal kinase (SAP/JNK) signaling pathway. With MAP2K4/MKK4, is the one of the only known kinase to directly activate the stress-activated protein kinase/c-Jun N-terminal kinases MAPK8/JNK1, MAPK9/JNK2 and MAPK10/JNK3. MAP2K4/MKK4 and MAP2K7/MKK7 both activate the JNKs by phosphorylation, but they differ in their preference for the phosphorylation site in the Thr-Pro-Tyr motif. MAP2K4/MKK4 shows preference for phosphorylation of the Tyr residue and MAP2K7/MKK7 for the Thr residue. The monophosphorylation of JNKs on the Thr residue is sufficient to increase JNK activity indicating that MAP2K7/MKK7 is important to trigger JNK activity, while the additional phosphorylation of the Tyr residue by MAP2K4/MKK4 ensures optimal JNK activation. Has a specific role in JNK signal transduction pathway activated by pro-inflammatory cytokines. The MKK/JNK signaling pathway is also involved in mitochondrial death signaling pathway, including the release cytochrome c, leading to apoptosis. Part of a non-canonical MAPK signaling pathway, composed of the upstream MAP3K12 kinase and downstream MAP kinases MAPK1/ERK2 and MAPK3/ERK1, that enhances the AP-1-mediated transcription of APP in response to APOE. This Homo sapiens (Human) protein is Dual specificity mitogen-activated protein kinase kinase 7 (MAP2K7).